Consider the following 233-residue polypeptide: Transcriptional regulatory protein PrrA (233 aa).

Residues 9-123 (RVLVVDDDSD…ELVARVKALL (115 aa)) form the Response regulatory domain. Position 58 is a 4-aspartylphosphate (Asp58). The segment at residues 134 to 232 (SETITVGPLE…VRGVGFVLRM (99 aa)) is a DNA-binding region (ompR/PhoB-type).

Phosphorylated by PrrB at Asp-58.

The protein localises to the cytoplasm. Its function is as follows. Member of the two-component regulatory system PrrB/PrrA that is involved specifically in early intracellular multiplication of Mycobacterium and is essential for its viability. Upon phosphorylation by PrrB, functions as a transcription regulator by direct binding to promoter regions of target genes to positively regulate their expression. Autoregulates its own expression. In Mycobacterium bovis (strain ATCC BAA-935 / AF2122/97), this protein is Transcriptional regulatory protein PrrA (prrA).